The primary structure comprises 469 residues: uncharacterized protein (469 aa).

One can recognise an HTH gntR-type domain in the interval 13 to 81 (TPLYEQLYTF…PKIGWFAAEV (69 aa)). Positions 41–60 (KRRLSSLLDVSTATIERAYE) form a DNA-binding region, H-T-H motif. Position 309 is an N6-(pyridoxal phosphate)lysine (Lys309).

It in the C-terminal section; belongs to the class-I pyridoxal-phosphate-dependent aminotransferase family. Pyridoxal 5'-phosphate is required as a cofactor.

This is an uncharacterized protein from Bacillus subtilis (strain 168).